The primary structure comprises 625 residues: MNYDVIVVGGGHAGIEASLASARMGKKTLLITMLVEQIGAASCNPAIGGLAKGHLVRELDAIGGEMGLCTDNTGIQFRILNASKGAAVQGSRAQIDMDKYREYMRKVCHNTPNLEVYQDEVTALLVKNDNEVCGVKTKLTEEFIAKKVVLTTGTFMRGLVHIGENKYEAGRAWELPSTTLSTQLKELGLRVGRLKTGTPSRLDANSIDFSVMDMHGGDVNPAPFSFRTNKSDFAPTQFPCYITYTNEKTHEIISSNFYRAPLFTGQIEGLGPRYCPSIEDKVNRFAERDRHQLFLEPQTAMCTEYYINGMSSSLPIDVQKAMIHSVKGLENAKIIRYGYAIEYDYVDPTELKHTLETKKIKNLYHAGQINATTGYEEAAAQGLIAGINACLSIDEKEPFILRRDEAYIGVLIDDLVTKGTNEPYRMFTSRAEYRLLLREENADLRLSQYGHKFGLIDDETIKKVENKRKTIEEAIEFMANEWMTSKKETLELLESIGEEKINDRVLLVDLIGRNSIDIFKFEKLVPSFAHLDNYLKEQIIIEAKYYRYIQKQQKQIEKMKKMLKATIPESFSYKGLPGLSNEVVEKLEKHRPPTIFNASLISGVTPAALDIIHLNLNIFVTNTKK.

FAD-binding positions include 9–14 (GGGHAG), Val-121, and Ser-177. Residue 271–285 (GPRYCPSIEDKVNRF) coordinates NAD(+). Gln-368 lines the FAD pocket.

This sequence belongs to the MnmG family. As to quaternary structure, homodimer. Heterotetramer of two MnmE and two MnmG subunits. The cofactor is FAD.

It localises to the cytoplasm. Its function is as follows. NAD-binding protein involved in the addition of a carboxymethylaminomethyl (cmnm) group at the wobble position (U34) of certain tRNAs, forming tRNA-cmnm(5)s(2)U34. In Aliarcobacter butzleri (strain RM4018) (Arcobacter butzleri), this protein is tRNA uridine 5-carboxymethylaminomethyl modification enzyme MnmG.